The sequence spans 155 residues: Ribosome maturation factor RimP (155 aa).

The protein belongs to the RimP family.

The protein localises to the cytoplasm. Functionally, required for maturation of 30S ribosomal subunits. In Parabacteroides distasonis (strain ATCC 8503 / DSM 20701 / CIP 104284 / JCM 5825 / NCTC 11152), this protein is Ribosome maturation factor RimP.